A 249-amino-acid chain; its full sequence is Interleukin-1 receptor-associated kinase 1-binding protein 1 homolog (249 aa).

It belongs to the IRAK1BP1 family.

Its subcellular location is the cytoplasm. It is found in the nucleus. In terms of biological role, may be part of a signaling pathway that leads to NF-kappa-B activation. This is Interleukin-1 receptor-associated kinase 1-binding protein 1 homolog (irak1bp1) from Danio rerio (Zebrafish).